Consider the following 246-residue polypeptide: Tyrosine recombinase XerD-like (246 aa).

The Core-binding (CB) domain maps to 1–72 (MINDINNFIE…AVNQFLFFLY (72 aa)). The region spanning 84–246 (QETEKITLTQ…TPITLERYYR (163 aa)) is the Tyr recombinase domain. Catalysis depends on residues Lys-149 and Arg-212. Residue Tyr-244 is the O-(3'-phospho-DNA)-tyrosine intermediate of the active site.

This sequence belongs to the 'phage' integrase family. XerD-like subfamily.

It is found in the cytoplasm. Putative tyrosine recombinase. Not involved in the cutting and rejoining of the recombining DNA molecules on dif(SL) site. The chain is Tyrosine recombinase XerD-like from Streptococcus agalactiae serotype III (strain NEM316).